We begin with the raw amino-acid sequence, 145 residues long: Arginine repressor (145 aa).

It belongs to the ArgR family.

It localises to the cytoplasm. The protein operates within amino-acid biosynthesis; L-arginine biosynthesis [regulation]. Functionally, regulates arginine biosynthesis genes. In Streptococcus pyogenes serotype M3 (strain ATCC BAA-595 / MGAS315), this protein is Arginine repressor.